A 709-amino-acid polypeptide reads, in one-letter code: Phosphoribosylformylglycinamidine synthase subunit PurL (709 aa).

H36 is a catalytic residue. ATP-binding residues include Y39 and K80. E82 lines the Mg(2+) pocket. Substrate-binding positions include 83–86 and R105; that span reads SHNH. The active-site Proton acceptor is the H84. Residue D106 participates in Mg(2+) binding. A substrate-binding site is contributed by Q226. A Mg(2+)-binding site is contributed by D252. Substrate is bound at residue 294–296; it reads ETQ. 2 residues coordinate ATP: D470 and G507. S510 provides a ligand contact to substrate.

Belongs to the FGAMS family. Monomer. Part of the FGAM synthase complex composed of 1 PurL, 1 PurQ and 2 PurS subunits.

Its subcellular location is the cytoplasm. The catalysed reaction is N(2)-formyl-N(1)-(5-phospho-beta-D-ribosyl)glycinamide + L-glutamine + ATP + H2O = 2-formamido-N(1)-(5-O-phospho-beta-D-ribosyl)acetamidine + L-glutamate + ADP + phosphate + H(+). It participates in purine metabolism; IMP biosynthesis via de novo pathway; 5-amino-1-(5-phospho-D-ribosyl)imidazole from N(2)-formyl-N(1)-(5-phospho-D-ribosyl)glycinamide: step 1/2. Its function is as follows. Part of the phosphoribosylformylglycinamidine synthase complex involved in the purines biosynthetic pathway. Catalyzes the ATP-dependent conversion of formylglycinamide ribonucleotide (FGAR) and glutamine to yield formylglycinamidine ribonucleotide (FGAM) and glutamate. The FGAM synthase complex is composed of three subunits. PurQ produces an ammonia molecule by converting glutamine to glutamate. PurL transfers the ammonia molecule to FGAR to form FGAM in an ATP-dependent manner. PurS interacts with PurQ and PurL and is thought to assist in the transfer of the ammonia molecule from PurQ to PurL. This Saccharolobus islandicus (strain Y.N.15.51 / Yellowstone #2) (Sulfolobus islandicus) protein is Phosphoribosylformylglycinamidine synthase subunit PurL.